Here is a 219-residue protein sequence, read N- to C-terminus: Probable GTP-binding protein EngB (219 aa).

The EngB-type G domain maps to 31–205; it reads VGVEIAFAGR…LSILNEWCHP (175 aa). GTP contacts are provided by residues 39–46, 66–70, 84–87, 151–154, and 184–186; these read GRSNAGKS, GRTQL, DLPG, TKSD, and FSA. Residues Ser-46 and Thr-68 each contribute to the Mg(2+) site.

It belongs to the TRAFAC class TrmE-Era-EngA-EngB-Septin-like GTPase superfamily. EngB GTPase family. Requires Mg(2+) as cofactor.

In terms of biological role, necessary for normal cell division and for the maintenance of normal septation. The polypeptide is Probable GTP-binding protein EngB (Shewanella sp. (strain W3-18-1)).